The following is a 327-amino-acid chain: rRNA 2'-O-methyltransferase fibrillarin (327 aa).

Residues 1 to 93 (MKPGFSPRGG…RGNQSGKNVM (93 aa)) form a disordered region. Residues 7–80 (PRGGGFGGRG…GGGRGRGGGR (74 aa)) are compositionally biased toward gly residues. Asymmetric dimethylarginine is present on residues Arg8, Arg15, Arg21, Arg24, Arg28, and Arg31. Residues Lys90, Lys108, and Lys115 each participate in a glycyl lysine isopeptide (Lys-Gly) (interchain with G-Cter in SUMO2) cross-link. The residue at position 108 (Lys108) is an N6-acetyllysine. Residue Ser122 is modified to Phosphoserine. Lys127 carries the post-translational modification N6-acetyllysine. Phosphoserine occurs at positions 130 and 132. Residues Lys137, Lys149, and Lys164 each participate in a glycyl lysine isopeptide (Lys-Gly) (interchain with G-Cter in SUMO2) cross-link. Residues 178-179 (TT) and 197-198 (EF) contribute to the S-adenosyl-L-methionine site. N6-acetyllysine occurs at positions 211 and 212. S-adenosyl-L-methionine is bound by residues 222-223 (DA) and 242-245 (DVAQ).

This sequence belongs to the methyltransferase superfamily. Fibrillarin family. Component of box C/D small nucleolar ribonucleoprotein (snoRNP) particles that contain SNU13, FBL, NOP5 and NOP56, plus a guide RNA. It is associated with the U3, U8, U13, X and Y small nuclear RNAs. Component of several ribosomal and nucleolar protein complexes. Part of the small subunit (SSU) processome, composed of more than 70 proteins and the RNA chaperone small nucleolar RNA (snoRNA) U3. Interacts with PRMT5 and UTP20. Interacts with DDX5 and C1QBP. Interacts with NOL11. Interacts with PIH1D1. Interacts with RRP1B. Interacts with NOLC1. Interacts with SDE2. Interacts with NOP2 and NOP56. In terms of processing, ubiquitinated. Ubiquitination leads to proteasomal degradation. Deubiquitinated by USP36. By homology to other fibrillarins, some or all of the N-terminal domain arginines are modified to asymmetric dimethylarginine (DMA). Post-translationally, acetylated by CREBBP/CBP, preventing methylation of 'Gln-105' of histone H2A (H2AQ104me), without affecting rRNA methylation. Deacetylation by SIRT7 restores methylation of 'Gln-105' of histone H2A (H2AQ104me).

It is found in the nucleus. The protein localises to the nucleolus. It localises to the nucleoplasm. It carries out the reaction L-glutaminyl-[histone H2A] + S-adenosyl-L-methionine = N(5)-methyl-L-glutaminyl-[histone H2A] + S-adenosyl-L-homocysteine + H(+). The catalysed reaction is a ribonucleotide in rRNA + S-adenosyl-L-methionine = a 2'-O-methylribonucleotide in rRNA + S-adenosyl-L-homocysteine + H(+). The enzyme catalyses a ribonucleotide in U6 snRNA + S-adenosyl-L-methionine = a 2'-O-methylribonucleotide in U6 snRNA + S-adenosyl-L-homocysteine + H(+). S-adenosyl-L-methionine-dependent methyltransferase that has the ability to methylate both RNAs and proteins. Involved in pre-rRNA processing by catalyzing the site-specific 2'-hydroxyl methylation of ribose moieties in pre-ribosomal RNA. Site specificity is provided by a guide RNA that base pairs with the substrate. Methylation occurs at a characteristic distance from the sequence involved in base pairing with the guide RNA. Probably catalyzes 2'-O-methylation of U6 snRNAs in box C/D RNP complexes. U6 snRNA 2'-O-methylation is required for mRNA splicing fidelity. Also acts as a protein methyltransferase by mediating methylation of 'Gln-105' of histone H2A (H2AQ104me), a modification that impairs binding of the FACT complex and is specifically present at 35S ribosomal DNA locus. Part of the small subunit (SSU) processome, first precursor of the small eukaryotic ribosomal subunit. During the assembly of the SSU processome in the nucleolus, many ribosome biogenesis factors, an RNA chaperone and ribosomal proteins associate with the nascent pre-rRNA and work in concert to generate RNA folding, modifications, rearrangements and cleavage as well as targeted degradation of pre-ribosomal RNA by the RNA exosome. The sequence is that of rRNA 2'-O-methyltransferase fibrillarin (Fbl) from Rattus norvegicus (Rat).